The following is a 429-amino-acid chain: Enolase (429 aa).

Residue Q167 coordinates (2R)-2-phosphoglycerate. Residue E209 is the Proton donor of the active site. Mg(2+) contacts are provided by D246, E289, and D316. (2R)-2-phosphoglycerate is bound by residues K341, R370, S371, and K392. The active-site Proton acceptor is K341.

Belongs to the enolase family. Component of the RNA degradosome, a multiprotein complex involved in RNA processing and mRNA degradation. The cofactor is Mg(2+).

The protein resides in the cytoplasm. The protein localises to the secreted. Its subcellular location is the cell surface. The enzyme catalyses (2R)-2-phosphoglycerate = phosphoenolpyruvate + H2O. Its pathway is carbohydrate degradation; glycolysis; pyruvate from D-glyceraldehyde 3-phosphate: step 4/5. Functionally, catalyzes the reversible conversion of 2-phosphoglycerate (2-PG) into phosphoenolpyruvate (PEP). It is essential for the degradation of carbohydrates via glycolysis. The polypeptide is Enolase (Pseudomonas fluorescens (strain ATCC BAA-477 / NRRL B-23932 / Pf-5)).